The sequence spans 302 residues: Putative S-adenosyl-L-methionine-dependent methyltransferase MMAR_1068 (302 aa).

S-adenosyl-L-methionine is bound by residues Asp-127 and 156 to 157 (DL).

Belongs to the UPF0677 family.

In terms of biological role, exhibits S-adenosyl-L-methionine-dependent methyltransferase activity. This is Putative S-adenosyl-L-methionine-dependent methyltransferase MMAR_1068 from Mycobacterium marinum (strain ATCC BAA-535 / M).